A 1402-amino-acid polypeptide reads, in one-letter code: Baculoviral IAP repeat-containing protein 1g (1402 aa).

BIR repeat units lie at residues 60–127 (EAKR…CEFL), 159–227 (EEAR…CEFL), and 278–345 (EELR…CVFL). Zn(2+)-binding residues include cysteine 315, cysteine 318, histidine 335, and cysteine 342. The NACHT domain maps to 464 to 759 (SVMCVEGEAG…EFLAAVRLTE (296 aa)). Lysine 476 lines the ATP pocket.

Its function is as follows. Prevents motor-neuron apoptosis induced by a variety of signals. The sequence is that of Baculoviral IAP repeat-containing protein 1g (Naip7) from Mus musculus (Mouse).